Consider the following 435-residue polypeptide: Glycine reductase complex component B subunit gamma (435 aa).

Residue U350 is part of the active site. Position 350 (U350) is a non-standard amino acid, selenocysteine.

The protein belongs to the GrdB/GrdF/GrdH family. As to quaternary structure, heterohexamer of two alpha, two beta and two gamma subunits. Component of the glycine reductase complex, together with components A and C. PB is substrate specific.

The catalysed reaction is acetyl phosphate + [thioredoxin]-disulfide + NH4(+) + H2O = [thioredoxin]-dithiol + glycine + phosphate + H(+). Functionally, in the first step of glycine reductase, the substrate is bound to component PB via a Schiff base intermediate. Then the PB-activated substrate is nucleophilically attacked by the selenol anion of component PA to transform it to a carboxymethylated selenoether and the respective amine. By action of component PC, acetyl phosphate is formed, leaving component PA in its oxidized state. Finally component PA becomes reduced by the thioredoxin system to start a new catalytic cycle of reductive deamination. In Carboxydothermus hydrogenoformans (strain ATCC BAA-161 / DSM 6008 / Z-2901), this protein is Glycine reductase complex component B subunit gamma (grdB).